Here is a 452-residue protein sequence, read N- to C-terminus: MAGYLRVVRSLCRASGSRPAWAPAALTAPTSQEQPRRHYADKRIKVAKPVVEMDGDEMTRIIWQFIKEKLILPHVDIQLKYFDLGLPNRDQTDDQVTIDSALATQKYSVAVKCATITPDEARVEEFKLKKMWKSPNGTIRNILGGTVFREPIICKNIPRLVPGWTKPITIGRHAHGDQYKATDFVADRAGTFKMVFTPKDGSGVKEWEVYNFPAGGVGMGMYNTDESISGFAHSCFQYAIQKKWPLYMSTKNTILKAYDGRFKDIFQEIFDKHYKTDFDKNKIWYEHRLIDDMVAQVLKSSGGFVWACKNYDGDVQSDILAQGFGSLGLMTSVLVCPDGKTIEAEAAHGTVTRHYREHQKGRPTSTNPIASIFAWTRGLEHRGKLDGNQDLIRFAQMLEKVCVETVESGAMTKDLAGCIHGLSNVKLNEHFLNTTDFLDTIKSNLDRALGRQ.

The transit peptide at 1 to 39 (MAGYLRVVRSLCRASGSRPAWAPAALTAPTSQEQPRRHY) directs the protein to the mitochondrion. 4 positions are modified to N6-acetyllysine: Lys45, Lys48, Lys67, and Lys69. N6-acetyllysine; alternate occurs at positions 80 and 106. An N6-succinyllysine; alternate mark is found at Lys80 and Lys106. NADP(+)-binding positions include 115–117 (TIT) and Arg122. Thr117 serves as a coordination point for D-threo-isocitrate. D-threo-isocitrate is bound by residues 134–140 (SPNGTIR) and Arg149. Lys155 is subject to N6-acetyllysine. Lys166 bears the N6-acetyllysine; alternate mark. The residue at position 166 (Lys166) is an N6-succinyllysine; alternate. Arg172 serves as a coordination point for D-threo-isocitrate. Lys180 and Lys193 each carry N6-acetyllysine; alternate. Residues Lys180 and Lys193 each carry the N6-succinyllysine; alternate modification. Lys199 bears the N6-acetyllysine mark. Residue Lys256 is modified to N6-acetyllysine; alternate. Lys256 is modified (N6-succinyllysine; alternate). Lys263, Lys272, Lys275, and Lys280 each carry N6-acetyllysine. The residue at position 282 (Lys282) is an N6-acetyllysine; alternate. Lys282 is modified (N6-succinyllysine; alternate). Mn(2+) is bound at residue Asp291. Lys299 is a binding site for NADP(+). Residue Asp314 participates in Mn(2+) binding. NADP(+) is bound by residues 349–354 (GTVTRH) and Asn367. Lys384 is subject to N6-acetyllysine; alternate. Position 384 is an N6-succinyllysine; alternate (Lys384). 3 positions are modified to N6-acetyllysine: Lys400, Lys413, and Lys442.

The protein belongs to the isocitrate and isopropylmalate dehydrogenases family. As to quaternary structure, homodimer. Requires Mg(2+) as cofactor. Mn(2+) is required as a cofactor. Post-translationally, acetylation at Lys-413 dramatically reduces catalytic activity. Deacetylated by SIRT3.

The protein resides in the mitochondrion. The catalysed reaction is D-threo-isocitrate + NADP(+) = 2-oxoglutarate + CO2 + NADPH. In terms of biological role, plays a role in intermediary metabolism and energy production. It may tightly associate or interact with the pyruvate dehydrogenase complex. This Homo sapiens (Human) protein is Isocitrate dehydrogenase [NADP], mitochondrial (IDH2).